Consider the following 209-residue polypeptide: Isopentenyl-diphosphate Delta-isomerase (209 aa).

Mn(2+) contacts are provided by histidine 31 and histidine 38. Residues 36-171 enclose the Nudix hydrolase domain; the sequence is PLHLAFSVYI…RLLVSPWCRA (136 aa). Cysteine 73 is an active-site residue. Cysteine 73 is a binding site for Mg(2+). Histidine 75 is a Mn(2+) binding site. Residue glutamate 93 participates in Mg(2+) binding. 2 residues coordinate Mn(2+): glutamate 120 and glutamate 122. Glutamate 122 is a catalytic residue.

It belongs to the IPP isomerase type 1 family. Requires Mg(2+) as cofactor. The cofactor is Mn(2+).

The protein localises to the cytoplasm. It carries out the reaction isopentenyl diphosphate = dimethylallyl diphosphate. The protein operates within isoprenoid biosynthesis; dimethylallyl diphosphate biosynthesis; dimethylallyl diphosphate from isopentenyl diphosphate: step 1/1. Catalyzes the 1,3-allylic rearrangement of the homoallylic substrate isopentenyl (IPP) to its highly electrophilic allylic isomer, dimethylallyl diphosphate (DMAPP). The chain is Isopentenyl-diphosphate Delta-isomerase from Rhizobium rhizogenes (Agrobacterium rhizogenes).